The primary structure comprises 216 residues: Trimethylamine corrinoid protein 1 (216 aa).

Residues 1–92 (MANKEEIIAK…EMEKRKSQTK (92 aa)) enclose the B12-binding N-terminal domain. One can recognise a B12-binding domain in the interval 94–216 (LGTIVIGTIE…VVSKVKAALL (123 aa)). Position 107 (histidine 107) interacts with methylcob(III)alamin.

The protein belongs to the methylamine corrinoid protein family. Can form a complex with MttB.

The protein operates within one-carbon metabolism; methanogenesis from trimethylamine. Acts probably as a methyl group carrier between MttB and either MtbA or MtaA. The sequence is that of Trimethylamine corrinoid protein 1 (mttC1) from Methanosarcina mazei (strain ATCC BAA-159 / DSM 3647 / Goe1 / Go1 / JCM 11833 / OCM 88) (Methanosarcina frisia).